A 69-amino-acid polypeptide reads, in one-letter code: Protein SlyX homolog (69 aa).

Belongs to the SlyX family.

The protein is Protein SlyX homolog of Pseudomonas paraeruginosa (strain DSM 24068 / PA7) (Pseudomonas aeruginosa (strain PA7)).